Here is a 322-residue protein sequence, read N- to C-terminus: Phosphatidylserine decarboxylase proenzyme (322 aa).

Residues Asp-90, His-147, and Ser-254 each act as charge relay system; for autoendoproteolytic cleavage activity in the active site. Ser-254 functions as the Schiff-base intermediate with substrate; via pyruvic acid; for decarboxylase activity in the catalytic mechanism. Position 254 is a pyruvic acid (Ser); by autocatalysis (Ser-254). Residues 293–322 (PDAEPAPLPAEEIEAEHDASPLVDDKKDQV) form a disordered region. Over residues 308-322 (EHDASPLVDDKKDQV) the composition is skewed to basic and acidic residues.

This sequence belongs to the phosphatidylserine decarboxylase family. PSD-B subfamily. Prokaryotic type I sub-subfamily. In terms of assembly, heterodimer of a large membrane-associated beta subunit and a small pyruvoyl-containing alpha subunit. The cofactor is pyruvate. Is synthesized initially as an inactive proenzyme. Formation of the active enzyme involves a self-maturation process in which the active site pyruvoyl group is generated from an internal serine residue via an autocatalytic post-translational modification. Two non-identical subunits are generated from the proenzyme in this reaction, and the pyruvate is formed at the N-terminus of the alpha chain, which is derived from the carboxyl end of the proenzyme. The autoendoproteolytic cleavage occurs by a canonical serine protease mechanism, in which the side chain hydroxyl group of the serine supplies its oxygen atom to form the C-terminus of the beta chain, while the remainder of the serine residue undergoes an oxidative deamination to produce ammonia and the pyruvoyl prosthetic group on the alpha chain. During this reaction, the Ser that is part of the protease active site of the proenzyme becomes the pyruvoyl prosthetic group, which constitutes an essential element of the active site of the mature decarboxylase.

It is found in the cell membrane. The catalysed reaction is a 1,2-diacyl-sn-glycero-3-phospho-L-serine + H(+) = a 1,2-diacyl-sn-glycero-3-phosphoethanolamine + CO2. Its pathway is phospholipid metabolism; phosphatidylethanolamine biosynthesis; phosphatidylethanolamine from CDP-diacylglycerol: step 2/2. Catalyzes the formation of phosphatidylethanolamine (PtdEtn) from phosphatidylserine (PtdSer). This chain is Phosphatidylserine decarboxylase proenzyme, found in Escherichia coli O139:H28 (strain E24377A / ETEC).